A 313-amino-acid chain; its full sequence is Mitochondrial uncoupling protein 4 (313 aa).

Solcar repeat units lie at residues 4–115, 124–215, and 224–309; these read KSFV…LKNK, LNLS…FKEG, and DGLG…VRKL. 6 consecutive transmembrane segments (helical) span residues 6 to 26, 84 to 104, 130 to 150, 189 to 209, 230 to 250, and 282 to 302; these read FVEG…LDLI, AAAL…YSTT, IGAG…ADVA, RGSA…LASY, VVAS…VDVI, and YKGF…LFVT.

This sequence belongs to the mitochondrial carrier (TC 2.A.29) family. Expressed in roots, leaves, stems and flowers.

The protein resides in the mitochondrion inner membrane. Functionally, PUMPS are mitochondrial transporter proteins that create proton leaks across the inner mitochondrial membrane, thus uncoupling oxidative phosphorylation. This leads to a decrease in the efficiency of oxidative phosphorylation and an increase in heat production. May be involved in protecting plant cells against oxidative stress damage. Recombinant PUMP4, reconstituted into liposomes, transports a wide range of dicarboxylic acids including malate, oxaloacetate and succinate as well as phosphate, sulfate and thiosulfate. However, it is unknown if these transports are of any biological significance in vivo. The protein is Mitochondrial uncoupling protein 4 (PUMP4) of Arabidopsis thaliana (Mouse-ear cress).